The primary structure comprises 441 residues: Ribulose bisphosphate carboxylase large chain (441 aa).

K4 is subject to N6,N6,N6-trimethyllysine. Positions 113 and 163 each coordinate substrate. The active-site Proton acceptor is K165. K167 lines the substrate pocket. Residues K191, D193, and E194 each coordinate Mg(2+). K191 carries the post-translational modification N6-carboxylysine. H284 acts as the Proton acceptor in catalysis. 3 residues coordinate substrate: R285, H317, and S369.

The protein belongs to the RuBisCO large chain family. Type I subfamily. As to quaternary structure, heterohexadecamer of 8 large chains and 8 small chains; disulfide-linked. The disulfide link is formed within the large subunit homodimers. It depends on Mg(2+) as a cofactor. In terms of processing, the disulfide bond which can form in the large chain dimeric partners within the hexadecamer appears to be associated with oxidative stress and protein turnover.

The protein resides in the plastid. Its subcellular location is the chloroplast. The enzyme catalyses 2 (2R)-3-phosphoglycerate + 2 H(+) = D-ribulose 1,5-bisphosphate + CO2 + H2O. It carries out the reaction D-ribulose 1,5-bisphosphate + O2 = 2-phosphoglycolate + (2R)-3-phosphoglycerate + 2 H(+). Functionally, ruBisCO catalyzes two reactions: the carboxylation of D-ribulose 1,5-bisphosphate, the primary event in carbon dioxide fixation, as well as the oxidative fragmentation of the pentose substrate in the photorespiration process. Both reactions occur simultaneously and in competition at the same active site. The polypeptide is Ribulose bisphosphate carboxylase large chain (Darlingtonia californica (California pitcher plant)).